We begin with the raw amino-acid sequence, 187 residues long: UPF0340 protein SMU_87 (187 aa).

Belongs to the UPF0340 family.

The sequence is that of UPF0340 protein SMU_87 from Streptococcus mutans serotype c (strain ATCC 700610 / UA159).